The chain runs to 491 residues: Glycylpeptide N-tetradecanoyltransferase (491 aa).

45–48 (HKFW) provides a ligand contact to tetradecanoyl-CoA. Positions 53 to 79 (VPQITGSGASAPMEEGPIDDPKTPADV) are disordered. Tetradecanoyl-CoA is bound by residues 182 to 184 (LCV) and 190 to 194 (SKRLA). Catalysis depends on Leu-491, which acts as the Proton acceptor; via carboxylate.

Belongs to the NMT family. As to quaternary structure, monomer.

It localises to the cytoplasm. The enzyme catalyses N-terminal glycyl-[protein] + tetradecanoyl-CoA = N-tetradecanoylglycyl-[protein] + CoA + H(+). Functionally, adds a myristoyl group to the N-terminal glycine residue of certain cellular proteins. This is Glycylpeptide N-tetradecanoyltransferase from Cryptococcus neoformans (Filobasidiella neoformans).